Consider the following 415-residue polypeptide: MFDRATQTLAAIDPEITAAIDAEVRRQEEHIELIASENYTSPAVMAAQGSQLTNKYAEGYPGKRYYGGCEHVDVVEQLAIDRAKQLFGAQNANVQPNSGSQANQAVFFGLLQPGDTIMGLSLAEGGHLTHGMPLNMSGKWFKVVSYGLDAQEDIDYDAMERLAHEHKPKLIIAGASAFALRIDFERFAKVAKAVGAYFMVDMAHYAGLIAAGVYPNPVPFADVVTTTTHKTLRGPRGGLILMTDAVAKQINSAIFPGIQGGPLMHVIAGKAVAFQEALQPEFKAYQEQVVKNATAMAETLTARGLRIVSGRTESHVMLVDLRPKGITGKEAEALLGRAHITCNKNGIPNDPQKPMVTSGIRLGSPAMTTRGFKEEQAVLTANLIADVLEAPNDEAVLERVRAQVAQLTRDFPVYR.

Residues leucine 122 and 126–128 (GHL) each bind (6S)-5,6,7,8-tetrahydrofolate. N6-(pyridoxal phosphate)lysine is present on lysine 230.

The protein belongs to the SHMT family. As to quaternary structure, homodimer. It depends on pyridoxal 5'-phosphate as a cofactor.

The protein resides in the cytoplasm. The catalysed reaction is (6R)-5,10-methylene-5,6,7,8-tetrahydrofolate + glycine + H2O = (6S)-5,6,7,8-tetrahydrofolate + L-serine. It functions in the pathway one-carbon metabolism; tetrahydrofolate interconversion. The protein operates within amino-acid biosynthesis; glycine biosynthesis; glycine from L-serine: step 1/1. Its function is as follows. Catalyzes the reversible interconversion of serine and glycine with tetrahydrofolate (THF) serving as the one-carbon carrier. This reaction serves as the major source of one-carbon groups required for the biosynthesis of purines, thymidylate, methionine, and other important biomolecules. Also exhibits THF-independent aldolase activity toward beta-hydroxyamino acids, producing glycine and aldehydes, via a retro-aldol mechanism. This Leptothrix cholodnii (strain ATCC 51168 / LMG 8142 / SP-6) (Leptothrix discophora (strain SP-6)) protein is Serine hydroxymethyltransferase.